Here is a 288-residue protein sequence, read N- to C-terminus: General transcription factor IIE subunit 2 (288 aa).

The segment at 16-56 (ALTTPAVEKRPSASSESSKKKRAKLELSSTSGSKPSSDGSN) is disordered. Residues 41 to 56 (ELSSTSGSKPSSDGSN) show a composition bias toward low complexity. Residues 63–143 (SLSGSSGYKF…YAFKPKYNLK (81 aa)) constitute a DNA-binding region (TFIIE beta).

This sequence belongs to the TFIIE beta subunit family. As to quaternary structure, tetramer of two alpha and two beta chains.

Its subcellular location is the nucleus. In terms of biological role, recruits TFIIH to the initiation complex and stimulates the RNA polymerase II C-terminal domain kinase and DNA-dependent ATPase activities of TFIIH. Both TFIIH and TFIIE are required for promoter clearance by RNA polymerase. This chain is General transcription factor IIE subunit 2 (gtf2e2), found in Xenopus laevis (African clawed frog).